The primary structure comprises 261 residues: Cytochrome c oxidase subunit 3 (261 aa).

The Mitochondrial matrix portion of the chain corresponds to 2-15 (THQTHAYHMVNPSP). A helical membrane pass occupies residues 16–34 (WPLTGALSALLLTSGLVMW). The Mitochondrial intermembrane segment spans residues 35-40 (FHYNST). A helical transmembrane segment spans residues 41-66 (ILLSLGLLTNILTMYQWWRDIIREGT). Residues 67-72 (YQGHHT) are Mitochondrial matrix-facing. The helical transmembrane segment at 73–105 (PIVQKGLRYGMILFIVSEVFFFAGFFWAFYHSS) threads the bilayer. Residues 106-128 (LVPTHDLGGCWPPTGITPLNPLE) are Mitochondrial intermembrane-facing. Residues 129-152 (VPLLNTSVLLASGVSITWAHHSLM) form a helical membrane-spanning segment. Topologically, residues 153–155 (EGN) are mitochondrial matrix. Residues 156–183 (RNHMNQALLITILLGLYFTILQASEYFE) form a helical membrane-spanning segment. Residues 184 to 190 (TSFSISD) are Mitochondrial intermembrane-facing. The helical transmembrane segment at 191 to 223 (GIYGSTFFMATGFHGLHVIIGSTFLIVCLLRQL) threads the bilayer. Residues 224-232 (KFHFTSKHH) lie on the Mitochondrial matrix side of the membrane. A helical transmembrane segment spans residues 233–256 (FGFEAAAWYWHFVDVVWLFLYVSI). The Mitochondrial intermembrane portion of the chain corresponds to 257–261 (YWWGS).

The protein belongs to the cytochrome c oxidase subunit 3 family. Component of the cytochrome c oxidase (complex IV, CIV), a multisubunit enzyme composed of 14 subunits. The complex is composed of a catalytic core of 3 subunits MT-CO1, MT-CO2 and MT-CO3, encoded in the mitochondrial DNA, and 11 supernumerary subunits COX4I, COX5A, COX5B, COX6A, COX6B, COX6C, COX7A, COX7B, COX7C, COX8 and NDUFA4, which are encoded in the nuclear genome. The complex exists as a monomer or a dimer and forms supercomplexes (SCs) in the inner mitochondrial membrane with NADH-ubiquinone oxidoreductase (complex I, CI) and ubiquinol-cytochrome c oxidoreductase (cytochrome b-c1 complex, complex III, CIII), resulting in different assemblies (supercomplex SCI(1)III(2)IV(1) and megacomplex MCI(2)III(2)IV(2)).

It localises to the mitochondrion inner membrane. The enzyme catalyses 4 Fe(II)-[cytochrome c] + O2 + 8 H(+)(in) = 4 Fe(III)-[cytochrome c] + 2 H2O + 4 H(+)(out). Functionally, component of the cytochrome c oxidase, the last enzyme in the mitochondrial electron transport chain which drives oxidative phosphorylation. The respiratory chain contains 3 multisubunit complexes succinate dehydrogenase (complex II, CII), ubiquinol-cytochrome c oxidoreductase (cytochrome b-c1 complex, complex III, CIII) and cytochrome c oxidase (complex IV, CIV), that cooperate to transfer electrons derived from NADH and succinate to molecular oxygen, creating an electrochemical gradient over the inner membrane that drives transmembrane transport and the ATP synthase. Cytochrome c oxidase is the component of the respiratory chain that catalyzes the reduction of oxygen to water. Electrons originating from reduced cytochrome c in the intermembrane space (IMS) are transferred via the dinuclear copper A center (CU(A)) of subunit 2 and heme A of subunit 1 to the active site in subunit 1, a binuclear center (BNC) formed by heme A3 and copper B (CU(B)). The BNC reduces molecular oxygen to 2 water molecules using 4 electrons from cytochrome c in the IMS and 4 protons from the mitochondrial matrix. In Rattus norvegicus (Rat), this protein is Cytochrome c oxidase subunit 3.